A 45-amino-acid chain; its full sequence is Large ribosomal subunit protein bL34 (45 aa).

Positions 1–10 (MTKRTLEGTN) are enriched in basic and acidic residues. A disordered region spans residues 1–27 (MTKRTLEGTNRKRKRTSGFRARMRSAT). The span at 11–23 (RKRKRTSGFRARM) shows a compositional bias: basic residues.

It belongs to the bacterial ribosomal protein bL34 family.

In Synechococcus elongatus (strain ATCC 33912 / PCC 7942 / FACHB-805) (Anacystis nidulans R2), this protein is Large ribosomal subunit protein bL34.